We begin with the raw amino-acid sequence, 942 residues long: Probable serine/threonine-protein kinase DDB_G0279719 (942 aa).

Residues 4–617 (YEVVKLIGVG…IDLILQNKLF (614 aa)) enclose the Protein kinase domain. Residues 10–18 (IGVGGEAKA) and K33 each bind ATP. Disordered stretches follow at residues 109-170 (NNNQ…INNN), 247-303 (SFSN…NGNT), 352-371 (QPPQ…GADV), and 408-445 (NDPS…LNIN). Residues 258–272 (NSNDSNLHQSSSNSS) are compositionally biased toward low complexity. Residues 288–303 (SPGTSTPYQKGSNGNT) are compositionally biased toward polar residues. Low complexity-rich tracts occupy residues 353 to 367 (PPQS…SSPT) and 410 to 432 (PSSH…PQSP). D487 functions as the Proton acceptor in the catalytic mechanism. Residues 642 to 686 (TNSKSNSSNNLNNSNSNNDIINNNNNNNSSNNINNNNIVNLNNSY) are disordered. The stretch at 675–703 (NNNNIVNLNNSYNNKQDKCEQRNKSLNQN) forms a coiled coil.

The protein belongs to the protein kinase superfamily. Ser/Thr protein kinase family.

The catalysed reaction is L-seryl-[protein] + ATP = O-phospho-L-seryl-[protein] + ADP + H(+). The enzyme catalyses L-threonyl-[protein] + ATP = O-phospho-L-threonyl-[protein] + ADP + H(+). The chain is Probable serine/threonine-protein kinase DDB_G0279719 from Dictyostelium discoideum (Social amoeba).